A 59-amino-acid chain; its full sequence is Protein SspF (59 aa).

This sequence belongs to the alpha/beta-type SASP family.

Functionally, may play some important role in either sporulation or the dormant spore. The protein is Protein SspF (sspF) of Bacillus cereus (strain ATCC 14579 / DSM 31 / CCUG 7414 / JCM 2152 / NBRC 15305 / NCIMB 9373 / NCTC 2599 / NRRL B-3711).